Here is a 337-residue protein sequence, read N- to C-terminus: tRNA N6-adenosine threonylcarbamoyltransferase (337 aa).

Residues His-111 and His-115 each contribute to the Fe cation site. Substrate contacts are provided by residues 134-138 (LVSGG), Asp-167, Gly-180, and Asn-272. Asp-300 contacts Fe cation.

This sequence belongs to the KAE1 / TsaD family. The cofactor is Fe(2+).

The protein resides in the cytoplasm. The catalysed reaction is L-threonylcarbamoyladenylate + adenosine(37) in tRNA = N(6)-L-threonylcarbamoyladenosine(37) in tRNA + AMP + H(+). Required for the formation of a threonylcarbamoyl group on adenosine at position 37 (t(6)A37) in tRNAs that read codons beginning with adenine. Is involved in the transfer of the threonylcarbamoyl moiety of threonylcarbamoyl-AMP (TC-AMP) to the N6 group of A37, together with TsaE and TsaB. TsaD likely plays a direct catalytic role in this reaction. The chain is tRNA N6-adenosine threonylcarbamoyltransferase from Pseudoalteromonas translucida (strain TAC 125).